The primary structure comprises 737 residues: Catalase-peroxidase (737 aa).

The tract at residues 1 to 32 is disordered; the sequence is MSKENMSNEGKCPFNHGAAGTNQSSGRGTSNK. Positions 20–32 are enriched in polar residues; sequence GTNQSSGRGTSNK. A cross-link (tryptophyl-tyrosyl-methioninium (Trp-Tyr) (with M-252)) is located at residues 103-226; sequence WHSAGTYRTA…LAAVQMGLIY (124 aa). The Proton acceptor role is filled by histidine 104. Positions 226-252 form a cross-link, tryptophyl-tyrosyl-methioninium (Tyr-Met) (with W-103); it reads YVNPEGPEGKPDTLASARDIRDTFGRM. Residue histidine 267 coordinates heme b.

The protein belongs to the peroxidase family. Peroxidase/catalase subfamily. Homodimer or homotetramer. It depends on heme b as a cofactor. Post-translationally, formation of the three residue Trp-Tyr-Met cross-link is important for the catalase, but not the peroxidase activity of the enzyme.

The catalysed reaction is H2O2 + AH2 = A + 2 H2O. It catalyses the reaction 2 H2O2 = O2 + 2 H2O. Functionally, bifunctional enzyme with both catalase and broad-spectrum peroxidase activity. This Marinomonas sp. (strain MWYL1) protein is Catalase-peroxidase.